The sequence spans 238 residues: 3-dehydroquinate dehydratase (238 aa).

3-dehydroquinate contacts are provided by residues 35-37 (ELR) and Arg-68. His-131 serves as the catalytic Proton donor/acceptor. The active-site Schiff-base intermediate with substrate is Lys-158. 2 residues coordinate 3-dehydroquinate: Arg-200 and Gln-223.

The protein belongs to the type-I 3-dehydroquinase family. As to quaternary structure, homodimer.

It catalyses the reaction 3-dehydroquinate = 3-dehydroshikimate + H2O. The protein operates within metabolic intermediate biosynthesis; chorismate biosynthesis; chorismate from D-erythrose 4-phosphate and phosphoenolpyruvate: step 3/7. Its function is as follows. Involved in the third step of the chorismate pathway, which leads to the biosynthesis of aromatic amino acids. Catalyzes the cis-dehydration of 3-dehydroquinate (DHQ) and introduces the first double bond of the aromatic ring to yield 3-dehydroshikimate. The polypeptide is 3-dehydroquinate dehydratase (Staphylococcus epidermidis (strain ATCC 35984 / DSM 28319 / BCRC 17069 / CCUG 31568 / BM 3577 / RP62A)).